Here is a 1332-residue protein sequence, read N- to C-terminus: MEPSTLYFYVNGRRVTEKNVDPETMLLPYLGRNLRLTGTKYGCGGGGCGACTVMVSRYDRGTGQIRHYPACACLTPLCSLHGAAVTTVEGVGSTRTRLHPVQERIAKSHGTQCGFCTPGMVMSLYALLRSHPQPSEEQLLEALAGNLCRCTGYRPILDAGKTFCKTSGCCQSKENGVCCLDQGVNGVQEAEGEQTSQELCSEEEFVPLDPTQELIFPPELMILAQKQPQKSRVFTGDRVTWISPVTLKDLLEAKAKNPRAPVVMGNTSVGPEMKFKGVFHPVIISPDGIEELSVIKQGNEGLTLGAGLSLAQVQDVLADVVQQLPEEKTQTLCALLKQLRTLAGSQIRNMASLGGHIMSRHLDSDLNPVLAAASCTLHVPSQEGDRQIPLDEHFLSRSPSADLRPQEVLLSVTIPYSRKWEFVSAFRQAQRKRSARAIVNVGMRVFFGAGDGVISELCILYGGVGPAIVCATDACRKLVGRHWTEEMLDEACRLVLGEVAIPGAAPGGRVEFRRTLLVSFLFRFYLQVSQSLSRMDPGRYPSLVGKYESALEDLCLGHHQRTFELQSADAKQLPQDPIGRPIMHLSGIKHTTGEAIYCDDMPLVDRELSLAFVTSSRAHAAILSMDLSEALSLPGVVDIVTAEHLGDANSFAKETLLATDKVLCVGHLVCAVIADSEVQAKRAAEKVKIVYQDLEPLILTIEEAIQHDSFFETERKLESGDVAEAFRTAEQVLEGSIHMGGQEHFYMETQSMLAVPKGEDQEIDLYVSTQFPTYIQEIVASTLKLPVNKVMCHVRRVGGAFGGKVGKTAILAAITAFAALKHCRAVRCILERGEDMLITGGRHPYLGKYKVGFRNNGQVVALDMEHYSNAGSTLDESLMVVEMGLLKMENAYKFPNLRCRGHACKTNLPSNTALRGFGFPQSGLITEACIVEVAARCGLSPEEVREVNMYRGTEQTHYGQEIHTQRLAQCWSECKAKATFSLRRAAVDRFNAGSPWKKRGLAMVPLKFPVGLGSVAMGQAAALVHVYLDGSVLLTHGGIEMGQGVHTKMIQVVSRELKMPMANVHLRGTSTETVPNANVSGGSVVADLNGLAVKDACQTLLKRLEPIISKNPKGTWKEWAQAAFDQSISLSAIGYFRGYDADMDWEKGKGHPFEYFVYGAACSEVEIDCLTGNHKNIRTDIVMDVGRSINPALDLGQVEGAFIQGMGLYTSEELKYGPQGALYTRGPDQYKIPAVCDVPAELHVFFLPPSKNSNTLYSSKGLGESGVFLGCSVLFAIWDAVSAARRERGLPGTLALSCPLTPEKIRMACEDRFTKMIPRDTPGSYVPWDVVV.

In terms of domain architecture, 2Fe-2S ferredoxin-type spans 4–91; sequence STLYFYVNGR…GAAVTTVEGV (88 aa). Residues C43, C48, C51, and C73 each coordinate [2Fe-2S] cluster. A Mo-molybdopterin-binding site is contributed by Q112. C113, C116, C148, and C150 together coordinate [2Fe-2S] cluster. A Mo-molybdopterin-binding site is contributed by C150. Positions 234–419 constitute an FAD-binding PCMH-type domain; the sequence is FTGDRVTWIS…LSVTIPYSRK (186 aa). Residues 262 to 269, A343, S352, H356, D365, and L409 contribute to the FAD site; that span reads VVMGNTSV. Mo-molybdopterin is bound by residues 800–801, M1041, 1082–1085, Q1197, and L1262; these read AF and GSVV. E1264 acts as the Proton acceptor; for azaheterocycle hydroxylase activity in catalysis.

This sequence belongs to the xanthine dehydrogenase family. As to quaternary structure, homodimer. It depends on [2Fe-2S] cluster as a cofactor. The cofactor is FAD. Requires Mo-molybdopterin as cofactor. Expressed in liver.

The protein resides in the cytoplasm. It carries out the reaction an aldehyde + O2 + H2O = a carboxylate + H2O2 + H(+). It catalyses the reaction retinal + O2 + H2O = retinoate + H2O2 + H(+). With respect to regulation, inhibited by menadione and isovanillin. Not inhibited by allopurinol, a xanthine dehydrogenase potent inhibitor. In terms of biological role, oxidase with broad substrate specificity, oxidizing aromatic azaheterocycles, such as N1-methylnicotinamide, N-methylphthalazinium and phthalazine, as well as aldehydes, such as benzaldehyde, retinal, pyridoxal, and vanillin. Plays a key role in the metabolism of xenobiotics and drugs containing aromatic azaheterocyclic substituents. Participates in the bioactivation of prodrugs such as famciclovir, catalyzing the oxidation step from 6-deoxypenciclovir to penciclovir, which is a potent antiviral agent. Is probably involved in the regulation of reactive oxygen species homeostasis. May be a prominent source of superoxide generation via the one-electron reduction of molecular oxygen. May also catalyze nitric oxide (NO) production via the reduction of nitrite to NO with NADH or aldehyde as electron donor. May play a role in adipogenesis. This chain is Aldehyde oxidase 1, found in Cavia porcellus (Guinea pig).